The chain runs to 70 residues: Large ribosomal subunit protein bL28 (70 aa).

Positions 1–26 (MAKRCEVCGKAPRSGNTVSHSDKKSG) are disordered.

It belongs to the bacterial ribosomal protein bL28 family.

The chain is Large ribosomal subunit protein bL28 (rpmB) from Thermotoga maritima (strain ATCC 43589 / DSM 3109 / JCM 10099 / NBRC 100826 / MSB8).